The following is a 1434-amino-acid chain: DNA-directed RNA polymerase subunit beta (1434 aa).

This sequence belongs to the RNA polymerase beta chain family. The RNAP catalytic core consists of 2 alpha, 1 beta, 1 beta' and 1 omega subunit. When a sigma factor is associated with the core the holoenzyme is formed, which can initiate transcription.

It catalyses the reaction RNA(n) + a ribonucleoside 5'-triphosphate = RNA(n+1) + diphosphate. DNA-dependent RNA polymerase catalyzes the transcription of DNA into RNA using the four ribonucleoside triphosphates as substrates. In Ureaplasma parvum serovar 3 (strain ATCC 700970), this protein is DNA-directed RNA polymerase subunit beta.